An 84-amino-acid chain; its full sequence is RNA-binding protein Hfq (84 aa).

A Sm domain is found at Asp11–Ile71.

It belongs to the Hfq family. As to quaternary structure, homohexamer.

In terms of biological role, RNA chaperone that binds small regulatory RNA (sRNAs) and mRNAs to facilitate mRNA translational regulation in response to envelope stress, environmental stress and changes in metabolite concentrations. Also binds with high specificity to tRNAs. This Paramagnetospirillum magneticum (strain ATCC 700264 / AMB-1) (Magnetospirillum magneticum) protein is RNA-binding protein Hfq.